The chain runs to 147 residues: Peptidyl-lysine N-acetyltransferase YjaB (147 aa).

In terms of domain architecture, N-acetyltransferase spans 3–144 (ISIRRSRHEE…KPYPLLNLAY (142 aa)).

This sequence belongs to the acetyltransferase family.

The catalysed reaction is L-lysyl-[protein] + acetyl-CoA = N(6)-acetyl-L-lysyl-[protein] + CoA + H(+). Its function is as follows. N-epsilon-lysine acetyltransferase that catalyzes acetylation of a large number of proteins. Binds acetyl-CoA. This chain is Peptidyl-lysine N-acetyltransferase YjaB (yjaB), found in Escherichia coli (strain K12).